The chain runs to 355 residues: Ribosomal RNA large subunit methyltransferase M (355 aa).

S-adenosyl-L-methionine is bound by residues S191, A224–G227, D243, D263, and D279. Residue K308 is the Proton acceptor of the active site.

This sequence belongs to the class I-like SAM-binding methyltransferase superfamily. RNA methyltransferase RlmE family. RlmM subfamily. In terms of assembly, monomer.

The protein resides in the cytoplasm. It carries out the reaction cytidine(2498) in 23S rRNA + S-adenosyl-L-methionine = 2'-O-methylcytidine(2498) in 23S rRNA + S-adenosyl-L-homocysteine + H(+). Catalyzes the 2'-O-methylation at nucleotide C2498 in 23S rRNA. This is Ribosomal RNA large subunit methyltransferase M from Stenotrophomonas maltophilia (strain K279a).